Reading from the N-terminus, the 550-residue chain is Glucose-6-phosphate isomerase (550 aa).

The active-site Proton donor is glutamate 356. Catalysis depends on residues histidine 387 and lysine 515.

The protein belongs to the GPI family.

It localises to the cytoplasm. The catalysed reaction is alpha-D-glucose 6-phosphate = beta-D-fructose 6-phosphate. It functions in the pathway carbohydrate biosynthesis; gluconeogenesis. The protein operates within carbohydrate degradation; glycolysis; D-glyceraldehyde 3-phosphate and glycerone phosphate from D-glucose: step 2/4. Its function is as follows. Catalyzes the reversible isomerization of glucose-6-phosphate to fructose-6-phosphate. The polypeptide is Glucose-6-phosphate isomerase (Aliivibrio salmonicida (strain LFI1238) (Vibrio salmonicida (strain LFI1238))).